Here is an 890-residue protein sequence, read N- to C-terminus: ATP-dependent DNA helicase DDX11 (890 aa).

In terms of domain architecture, Helicase ATP-binding spans Lys4–Leu424. Ser39–Ser46 provides a ligand contact to ATP. Residues Leu71–Asn85 are compositionally biased toward basic and acidic residues. Disordered regions lie at residues Leu71–Trp95 and Glu176–Asp199. [4Fe-4S] cluster is bound by residues Cys246, Cys264, Cys294, and Cys329. Positions Asp372–His375 match the DEAH box motif.

Belongs to the DEAD box helicase family. DEAH subfamily. DDX11/CHL1 sub-subfamily. Requires [4Fe-4S] cluster as cofactor.

The protein localises to the nucleus. Its subcellular location is the nucleolus. It localises to the cytoplasm. It is found in the cytoskeleton. The protein resides in the spindle pole. The protein localises to the midbody. Its subcellular location is the microtubule organizing center. It localises to the centrosome. It carries out the reaction Couples ATP hydrolysis with the unwinding of duplex DNA at the replication fork by translocating in the 5'-3' direction. This creates two antiparallel DNA single strands (ssDNA). The leading ssDNA polymer is the template for DNA polymerase III holoenzyme which synthesizes a continuous strand.. The enzyme catalyses ATP + H2O = ADP + phosphate + H(+). In terms of biological role, DNA-dependent ATPase and ATP-dependent DNA helicase that participates in various functions in genomic stability, including DNA replication, DNA repair and heterochromatin organization as well as in ribosomal RNA synthesis. Plays a role in DNA double-strand break (DSB) repair at the DNA replication fork during DNA replication recovery from DNA damage. Plays a role in the regulation of sister chromatid cohesion and mitotic chromosome segregation. Stimulates 5'-single-stranded DNA flap endonuclease activity of FEN1 in an ATP- and helicase-independent manner. Also plays a role in heterochromatin organization. Involved in rRNA transcription activation through binding to active hypomethylated rDNA gene loci by recruiting UBTF and the RNA polymerase Pol I transcriptional machinery. Plays a role in embryonic development. Associates with chromatin at DNA replication fork regions. Binds to single- and double-stranded DNAs. The chain is ATP-dependent DNA helicase DDX11 from Danio rerio (Zebrafish).